We begin with the raw amino-acid sequence, 541 residues long: 2-succinyl-5-enolpyruvyl-6-hydroxy-3-cyclohexene-1-carboxylate synthase (541 aa).

It belongs to the TPP enzyme family. MenD subfamily. As to quaternary structure, homodimer. It depends on Mg(2+) as a cofactor. Mn(2+) is required as a cofactor. Thiamine diphosphate serves as cofactor.

It carries out the reaction isochorismate + 2-oxoglutarate + H(+) = 5-enolpyruvoyl-6-hydroxy-2-succinyl-cyclohex-3-ene-1-carboxylate + CO2. The protein operates within quinol/quinone metabolism; 1,4-dihydroxy-2-naphthoate biosynthesis; 1,4-dihydroxy-2-naphthoate from chorismate: step 2/7. It functions in the pathway quinol/quinone metabolism; menaquinone biosynthesis. Functionally, catalyzes the thiamine diphosphate-dependent decarboxylation of 2-oxoglutarate and the subsequent addition of the resulting succinic semialdehyde-thiamine pyrophosphate anion to isochorismate to yield 2-succinyl-5-enolpyruvyl-6-hydroxy-3-cyclohexene-1-carboxylate (SEPHCHC). This is 2-succinyl-5-enolpyruvyl-6-hydroxy-3-cyclohexene-1-carboxylate synthase from Leuconostoc mesenteroides subsp. mesenteroides (strain ATCC 8293 / DSM 20343 / BCRC 11652 / CCM 1803 / JCM 6124 / NCDO 523 / NBRC 100496 / NCIMB 8023 / NCTC 12954 / NRRL B-1118 / 37Y).